A 56-amino-acid chain; its full sequence is PI-stichotoxin-Hcr2o (56 aa).

In terms of domain architecture, BPTI/Kunitz inhibitor spans 4 to 54; it reads CLEPKVVGPCKARIRRFYFDSETGKCTPFIYGGCGGNGNNFETLHACRAIC. Disulfide bonds link Cys4–Cys54, Cys13–Cys37, and Cys29–Cys50.

This sequence belongs to the venom Kunitz-type family. Sea anemone type 2 potassium channel toxin subfamily.

It is found in the secreted. Its subcellular location is the nematocyst. This recombinant serine protease inhibitor inhibits both trypsin (Ki=21 nM) and chymotrypsin (Ki=500 nM). It possesses anti-inflammatory activity in vitro. It inhibits macrophage LPS-induced nitric oxide synthesis, and blocks histamine influence on intracellular calcium concentration in murine bone marrow-derived macrophages, which can indicate inhibition of H1-histamine receptor (HRH1). In vitro, it shows cytoprotective activity in the oxidative stress agent 6-hydroxydopamine (6-OHDA)-induced neurotoxicity model. In this model, it decreases reactive oxygen species (ROS) levels, and increases cell viability in a correlated manner. It is possible that the observed effect is due to the ability of this peptides to act as free-radical scavenger. In vivo, it shows analgesic activity, since it increases hot plate and tail flick withdrawal latencies, when using a mice thermal pain stimulation model. The polypeptide is PI-stichotoxin-Hcr2o (Radianthus crispa (Leathery sea anemone)).